A 312-amino-acid polypeptide reads, in one-letter code: Protein Rep40 (312 aa).

Residues 84-239 (DPQYAASVFL…LDHDFGKVTK (156 aa)) enclose the SF3 helicase domain. An ATP-binding site is contributed by 110–117 (GPATTGKT). Residues 264–301 (KGGAKKRPAPSDADISEPKRVRESVAQPSTSDAEASIN) are disordered.

As to quaternary structure, homooligomer.

The protein resides in the host nucleus. The enzyme catalyses ATP + H2O = ADP + phosphate + H(+). Functionally, plays a critical role during packaging of viral DNA into empty capsids, where they are thought to be part of the packaging motor complex. The single stranded genomic DNA is packaged in a 3' to 5' direction and requires the association of viral DNA with Rep40. In Mammalia (AAV-2), this protein is Protein Rep40 (Rep40).